The sequence spans 489 residues: Dipeptide and tripeptide permease B (489 aa).

Residues 1–27 are Cytoplasmic-facing; it reads MNKPASIGLLQQPKPFFMIFFVELWER. Residues 28-48 traverse the membrane as a helical segment; the sequence is FGYYGVQGILAVYFVHKLGFS. The Periplasmic segment spans residues 49-52; the sequence is QEQA. A helical transmembrane segment spans residues 53–73; it reads FTTFGAFAALVYGLIAIGGYV. At 74–82 the chain is on the cytoplasmic side; it reads GDHLLGTKR. Residues 83-103 traverse the membrane as a helical segment; the sequence is TIVLGAIVLTVGYFMTGLSIL. The Periplasmic segment spans residues 104-106; the sequence is KPE. The chain crosses the membrane as a helical span at residues 107 to 127; the sequence is LIFYALGTIAVGNGLFKANPA. Residues 128–146 are Cytoplasmic-facing; sequence SLLSKCYPPKDPRLDGAFT. A helical transmembrane segment spans residues 147–167; sequence LFYMSINIGSLFSLAIAPVIA. At 168–171 the chain is on the periplasmic side; sequence EKFG. The chain crosses the membrane as a helical span at residues 172-192; that stretch reads YAVTYNICGIGLIIALLVYVL. Topologically, residues 193-212 are cytoplasmic; that stretch reads YRNTVRNIGSEPDHRPINYK. 2 helical membrane passes run 213–233 and 234–254; these read NLLL…WLMH and NVKI…FIFF. Residues 255-267 lie on the Cytoplasmic side of the membrane; that stretch reads REAFKQDKVGRNK. A helical membrane pass occupies residues 268–288; that stretch reads MFVAFILMLQAIVFFILYAQM. Over 289–311 the chain is Periplasmic; sequence PTSLNFFAINNVHHQLLGFNINP. A helical transmembrane segment spans residues 312 to 332; it reads VSFQALNPFWIVVASPILAAL. The Cytoplasmic portion of the chain corresponds to 333-350; the sequence is YTHWGSRSKDLTMPAKFT. A helical membrane pass occupies residues 351–371; the sequence is VGMFLCSLGFLTAAAAGLWFA. The Periplasmic portion of the chain corresponds to 372-375; that stretch reads DEQG. A helical transmembrane segment spans residues 376-396; sequence LTSPWFIVLVYLFQSLGELMI. At 397-419 the chain is on the cytoplasmic side; sequence SALGLAMVAALVPQYLMGFILGM. Residues 420-440 traverse the membrane as a helical segment; it reads WYLTQATSFLLGGYVAAFTAI. The Periplasmic portion of the chain corresponds to 441-456; it reads PEGITDPLETLPVYTN. Residues 457–477 traverse the membrane as a helical segment; sequence VFGKIGITTFIVAIIMAITVP. The Cytoplasmic portion of the chain corresponds to 478–489; the sequence is LLNRMMNGKQKA.

The protein belongs to the major facilitator superfamily. Proton-dependent oligopeptide transporter (POT/PTR) (TC 2.A.17) family. DtpB subfamily.

It is found in the cell inner membrane. Proton-dependent permease that transports di- and tripeptides. The chain is Dipeptide and tripeptide permease B from Photorhabdus asymbiotica subsp. asymbiotica (strain ATCC 43949 / 3105-77) (Xenorhabdus luminescens (strain 2)).